A 91-amino-acid chain; its full sequence is Lipolysis-activating peptide 1-alpha chain (91 aa).

The signal sequence occupies residues 1 to 21; that stretch reads MNIKLFCFLSILISLTGLSLS. The LCN-type CS-alpha/beta domain maps to 23-87; it reads DDGNYPIDAN…FFDAYKTYCK (65 aa). 3 disulfides stabilise this stretch: C38-C61, C47-C66, and C51-C68.

The protein belongs to the long (3 C-C) scorpion toxin superfamily. Heterodimer of this alpha chain and a beta chain (AC D9U2A2). Expressed by the venom gland.

Its subcellular location is the secreted. In terms of biological role, the heterodimer LVP1 induces lipolysis in rat adipocytes. Induction of lipolysis by LVP1 appears to be mediated through the beta-2 adrenergic receptor pathway (ADRB2). The polypeptide is Lipolysis-activating peptide 1-alpha chain (Lychas mucronatus (Chinese swimming scorpion)).